A 106-amino-acid polypeptide reads, in one-letter code: Large ribosomal subunit protein uL24 (106 aa).

It belongs to the universal ribosomal protein uL24 family. In terms of assembly, part of the 50S ribosomal subunit.

In terms of biological role, one of two assembly initiator proteins, it binds directly to the 5'-end of the 23S rRNA, where it nucleates assembly of the 50S subunit. Its function is as follows. One of the proteins that surrounds the polypeptide exit tunnel on the outside of the subunit. This is Large ribosomal subunit protein uL24 from Clostridium acetobutylicum (strain ATCC 824 / DSM 792 / JCM 1419 / IAM 19013 / LMG 5710 / NBRC 13948 / NRRL B-527 / VKM B-1787 / 2291 / W).